The chain runs to 106 residues: Large ribosomal subunit protein uL24 (106 aa).

The protein belongs to the universal ribosomal protein uL24 family. Part of the 50S ribosomal subunit.

Its function is as follows. One of two assembly initiator proteins, it binds directly to the 5'-end of the 23S rRNA, where it nucleates assembly of the 50S subunit. Functionally, one of the proteins that surrounds the polypeptide exit tunnel on the outside of the subunit. This chain is Large ribosomal subunit protein uL24, found in Polaromonas sp. (strain JS666 / ATCC BAA-500).